A 750-amino-acid polypeptide reads, in one-letter code: Photosystem I P700 chlorophyll a apoprotein A1 (750 aa).

The next 8 membrane-spanning stretches (helical) occupy residues 72 to 95 (VFSA…FHGA), 158 to 181 (LYTT…FHYH), 197 to 221 (MNHH…HVSL), 293 to 311 (TVHH…GHMY), 348 to 371 (WHAQ…HHMY), 387 to 413 (LSLF…IFMV), 435 to 457 (AIIS…LYIH), and 532 to 550 (FLVH…LILL). [4Fe-4S] cluster is bound by residues C574 and C583. 2 consecutive transmembrane segments (helical) span residues 590–611 (HVFL…HFSW) and 664–686 (LSAY…MFLF). H675 serves as a coordination point for chlorophyll a'. Chlorophyll a contacts are provided by M683 and Y691. A phylloquinone-binding site is contributed by W692. Residues 724-744 (AVGVAHYLLGGIATTWAFFLA) traverse the membrane as a helical segment.

The protein belongs to the PsaA/PsaB family. As to quaternary structure, the PsaA/B heterodimer binds the P700 chlorophyll special pair and subsequent electron acceptors. PSI consists of a core antenna complex that captures photons, and an electron transfer chain that converts photonic excitation into a charge separation. The eukaryotic PSI reaction center is composed of at least 11 subunits. Requires P700 is a chlorophyll a/chlorophyll a' dimer, A0 is one or more chlorophyll a, A1 is one or both phylloquinones and FX is a shared 4Fe-4S iron-sulfur center. as cofactor.

It is found in the plastid. Its subcellular location is the chloroplast thylakoid membrane. The catalysed reaction is reduced [plastocyanin] + hnu + oxidized [2Fe-2S]-[ferredoxin] = oxidized [plastocyanin] + reduced [2Fe-2S]-[ferredoxin]. Its function is as follows. PsaA and PsaB bind P700, the primary electron donor of photosystem I (PSI), as well as the electron acceptors A0, A1 and FX. PSI is a plastocyanin-ferredoxin oxidoreductase, converting photonic excitation into a charge separation, which transfers an electron from the donor P700 chlorophyll pair to the spectroscopically characterized acceptors A0, A1, FX, FA and FB in turn. Oxidized P700 is reduced on the lumenal side of the thylakoid membrane by plastocyanin. This chain is Photosystem I P700 chlorophyll a apoprotein A1, found in Mesostigma viride (Green alga).